The primary structure comprises 119 residues: Beta-2-microglobulin (119 aa).

The signal sequence occupies residues 1-20; it reads MARSVVVALLVLLSLSGLEA. One can recognise an Ig-like C1-type domain in the interval 25–114; the sequence is PKIQVYSRHP…VTFSTPKTVK (90 aa). A disulfide bond links Cys-45 and Cys-100.

The protein belongs to the beta-2-microglobulin family. Heterodimer of an alpha chain and a beta chain. Beta-2-microglobulin is the beta-chain of major histocompatibility complex class I molecules.

The protein resides in the secreted. Functionally, component of the class I major histocompatibility complex (MHC). Involved in the presentation of peptide antigens to the immune system. This Ateles paniscus (Black spider monkey) protein is Beta-2-microglobulin (B2M).